The following is a 518-amino-acid chain: Cytochrome P450 monooxygenase atnE (518 aa).

A helical membrane pass occupies residues 11 to 31 (FLAAFAVWMGVVVLAFAIFCV). Residue N184 is glycosylated (N-linked (GlcNAc...) asparagine). C458 serves as a coordination point for heme.

This sequence belongs to the cytochrome P450 family. It depends on heme as a cofactor.

It is found in the membrane. Its pathway is secondary metabolite biosynthesis. In terms of biological role, cytochrome P450 monooxygenase; part of the gene cluster that mediates the biosynthesis of aspercryptins, linear lipopeptides built from six amino acids including 2 highly unusual and nonproteogenic amino acids, 2-amino-octanoic acid (2aoa) and 2-amino-dodecanol (2adol). The core structure of aspercryptins is as follows: Ser/Ala-Thr-Ile/Val-2aoa-Asn-2adol. The first step of aspercryptin biosynthesis is the generation of the fatty acid precursors, octanoic and dodecanoic acids, by the FAS subunits atnF and atnM. The fatty acid precursors are likely transformed into the corresponding alpha-amino fatty acids in three steps. First, they are hydroxylated by the cytochrome P450 monooxygenase atnE, then oxidized to the corresponding alpha-keto acids by the NAD(P)-dependent oxidoreductase atnD, and finally converted to the alpha-amino fatty acids by the PLP-dependent aminotransferases atnH or atnJ. the alpha-amino fatty acids, 2-amino-octanoic and 2-amino-dodecanoic acids, are recognized, activated, and covalently tethered to the NRPS atnA by its fourth and sixth adenylation domains. The second module of atnA is the Thr module and contains an epimerase (E) domain responsible for the epimerization of Thr to D-allo-Thr. Additionally, despite atnA having only one epimerase domain, the first amino acid of aspercryptin A1 is D-Ser, suggesting that serine is either loaded directly as D-Ser on the first module or that the epimerase domain in the threonine module epimerizes both L-Ser and L-Thr. After condensation of the hexapeptide of aspercryptin, the C-terminal reductase (TE) domain might be involved in the reductive release and production of the aldehyde hexapeptide. Further reduction would generate aspercryptins. The variety of aspercryptins produced reflects the flexibility of the atnA NRPS, allowing incorporation of alanine instead of serine, valine for isoleucine, and a C10 fatty amino alcohol instead of the C12 version. AtnB seems to be involved in the selectivity for Ile versus Val by the third module. Moreover, type B, C and D aspercryptins have an additional N-terminal cichorine, acetyl and propionyl group respectively. This chain is Cytochrome P450 monooxygenase atnE, found in Emericella nidulans (strain FGSC A4 / ATCC 38163 / CBS 112.46 / NRRL 194 / M139) (Aspergillus nidulans).